The primary structure comprises 291 residues: Methionine aminopeptidase (291 aa).

Histidine 118 contacts substrate. 3 residues coordinate a divalent metal cation: aspartate 135, aspartate 146, and histidine 209. Histidine 216 is a binding site for substrate. Positions 241 and 273 each coordinate a divalent metal cation.

The protein belongs to the peptidase M24A family. Methionine aminopeptidase type 1 subfamily. As to quaternary structure, monomer. The cofactor is Co(2+). Zn(2+) serves as cofactor. Mn(2+) is required as a cofactor. It depends on Fe(2+) as a cofactor.

The enzyme catalyses Release of N-terminal amino acids, preferentially methionine, from peptides and arylamides.. Functionally, removes the N-terminal methionine from nascent proteins. The N-terminal methionine is often cleaved when the second residue in the primary sequence is small and uncharged (Met-Ala-, Cys, Gly, Pro, Ser, Thr, or Val). Requires deformylation of the N(alpha)-formylated initiator methionine before it can be hydrolyzed. In Chlamydia muridarum (strain MoPn / Nigg), this protein is Methionine aminopeptidase.